A 255-amino-acid polypeptide reads, in one-letter code: Pyridoxine 5'-phosphate synthase (255 aa).

The 3-amino-2-oxopropyl phosphate site is built by asparagine 8 and arginine 19. The active-site Proton acceptor is histidine 44. The 1-deoxy-D-xylulose 5-phosphate site is built by arginine 46 and histidine 51. Glutamate 74 functions as the Proton acceptor in the catalytic mechanism. Residue threonine 111 coordinates 1-deoxy-D-xylulose 5-phosphate. Catalysis depends on histidine 202, which acts as the Proton donor. Residues aspartate 203 and 225–226 (GH) each bind 3-amino-2-oxopropyl phosphate.

The protein belongs to the PNP synthase family. As to quaternary structure, homooctamer; tetramer of dimers.

The protein resides in the cytoplasm. It carries out the reaction 3-amino-2-oxopropyl phosphate + 1-deoxy-D-xylulose 5-phosphate = pyridoxine 5'-phosphate + phosphate + 2 H2O + H(+). It participates in cofactor biosynthesis; pyridoxine 5'-phosphate biosynthesis; pyridoxine 5'-phosphate from D-erythrose 4-phosphate: step 5/5. Its function is as follows. Catalyzes the complicated ring closure reaction between the two acyclic compounds 1-deoxy-D-xylulose-5-phosphate (DXP) and 3-amino-2-oxopropyl phosphate (1-amino-acetone-3-phosphate or AAP) to form pyridoxine 5'-phosphate (PNP) and inorganic phosphate. The protein is Pyridoxine 5'-phosphate synthase of Xanthomonas axonopodis pv. citri (strain 306).